Consider the following 418-residue polypeptide: tRNA(Met) cytidine acetate ligase (418 aa).

3 residues coordinate ATP: glycine 95, asparagine 161, and arginine 186.

The protein belongs to the TmcAL family.

The protein resides in the cytoplasm. The catalysed reaction is cytidine(34) in elongator tRNA(Met) + acetate + ATP = N(4)-acetylcytidine(34) in elongator tRNA(Met) + AMP + diphosphate. Its function is as follows. Catalyzes the formation of N(4)-acetylcytidine (ac(4)C) at the wobble position of elongator tRNA(Met), using acetate and ATP as substrates. First activates an acetate ion to form acetyladenylate (Ac-AMP) and then transfers the acetyl group to tRNA to form ac(4)C34. The sequence is that of tRNA(Met) cytidine acetate ligase from Thermotoga maritima (strain ATCC 43589 / DSM 3109 / JCM 10099 / NBRC 100826 / MSB8).